The chain runs to 837 residues: Tuftelin-interacting protein 11 (837 aa).

A compositionally biased stretch (basic and acidic residues) spans 1-13; that stretch reads MSLSHLYRDGEGH. Disordered stretches follow at residues 1–31, 54–73, and 85–133; these read MSLS…DWDL, WAER…RARD, and LKKG…KGFA. The required for interaction with DHX15 stretch occupies residues 1-50; that stretch reads MSLSHLYRDGEGHMDDDDDERENFEITDWDLQNEFNPNRQRHWQTKEEAT. A Phosphoserine modification is found at S2. Positions 14-28 are enriched in acidic residues; that stretch reads MDDDDDERENFEITD. Basic and acidic residues predominate over residues 54 to 64; sequence WAERDSDEERP. Phosphoserine is present on residues S59 and S98. Positions 91 to 102 are enriched in acidic residues; sequence EEAELEDSEDEE. A compositionally biased stretch (basic and acidic residues) spans 103–116; it reads KPVKQDDFPKDFGP. A Phosphoserine modification is found at S144. The region spanning 149-195 is the G-patch domain; it reads TKGIGQKLLQKMGYVPGRGLGKNAQGIINPIEAKQRKGKGAVGAYGS. 2 disordered regions span residues 183–236 and 289–312; these read QRKG…KKKP and HNVP…EAKA. S210 carries the phosphoserine modification. Over residues 217–231 the composition is skewed to basic and acidic residues; the sequence is EFQKELSQWRKDPSG. The short motif at 700–705 is the Nuclear localization signal element; that stretch reads VKDKFN. The tract at residues 710–734 is required for nuclear speckle localization; the sequence is IMNRAVSSNVGAYMQPGARENIAYL.

This sequence belongs to the TFP11/STIP family. As to quaternary structure, identified in the spliceosome C complex. Found in the Intron Large (IL) complex, a post-mRNA release spliceosomal complex containing the excised intron, U2, U5 and U6 snRNPs, and splicing factors. Interacts with TUFT1. Interacts with DHX15; indicative for a recruitment of DHX15 to the IL complex. Interacts with GCFC2.

The protein localises to the cytoplasm. Its subcellular location is the nucleus. Functionally, involved in pre-mRNA splicing, specifically in spliceosome disassembly during late-stage splicing events. Intron turnover seems to proceed through reactions in two lariat-intron associated complexes termed Intron Large (IL) and Intron Small (IS). In cooperation with DHX15 seems to mediate the transition of the U2, U5 and U6 snRNP-containing IL complex to the snRNP-free IS complex leading to efficient debranching and turnover of excised introns. May play a role in the differentiation of ameloblasts and odontoblasts or in the forming of the enamel extracellular matrix. This is Tuftelin-interacting protein 11 (TFIP11) from Canis lupus familiaris (Dog).